The primary structure comprises 159 residues: Small ribosomal subunit protein uS7c (159 aa).

It belongs to the universal ribosomal protein uS7 family. Part of the 30S ribosomal subunit.

It localises to the plastid. The protein resides in the chloroplast. In terms of biological role, one of the primary rRNA binding proteins, it binds directly to 16S rRNA where it nucleates assembly of the head domain of the 30S subunit. The polypeptide is Small ribosomal subunit protein uS7c (rps7) (Bigelowiella natans (Pedinomonas minutissima)).